The primary structure comprises 212 residues: uncharacterized protein (212 aa).

Positions 1–21 (MRRLTAFGLALLLLASGVARG) are cleaved as a signal peptide.

It to E.coli YfaT and T.maritima TM0986.

This is an uncharacterized protein from Pseudomonas aeruginosa (strain ATCC 15692 / DSM 22644 / CIP 104116 / JCM 14847 / LMG 12228 / 1C / PRS 101 / PAO1).